The chain runs to 436 residues: Trigger factor (436 aa).

One can recognise a PPIase FKBP-type domain in the interval 163-248; the sequence is GDRVTVDFEG…LKKIEAAHLP (86 aa).

This sequence belongs to the FKBP-type PPIase family. Tig subfamily.

The protein localises to the cytoplasm. The catalysed reaction is [protein]-peptidylproline (omega=180) = [protein]-peptidylproline (omega=0). Involved in protein export. Acts as a chaperone by maintaining the newly synthesized protein in an open conformation. Functions as a peptidyl-prolyl cis-trans isomerase. The sequence is that of Trigger factor from Albidiferax ferrireducens (strain ATCC BAA-621 / DSM 15236 / T118) (Rhodoferax ferrireducens).